The sequence spans 580 residues: Probable RNA-binding protein CG14230 (580 aa).

Positions 4–81 (TRFFLADLPT…EKLRVSLAKE (78 aa)) constitute an RRM domain. Residues 89–100 (REREENQRREQG) are compositionally biased toward basic and acidic residues. Disordered stretches follow at residues 89 to 131 (RERE…EDEE) and 173 to 211 (QHRK…KSAI). A compositionally biased stretch (polar residues) spans 110-120 (PSSQLLVQSGQ). Position 231 is a phosphoserine (Ser231). 2 stretches are compositionally biased toward acidic residues: residues 254 to 263 (ENDDDEEEEQ) and 298 to 313 (NEEE…EPEE). Disordered stretches follow at residues 254 to 316 (ENDD…ESER), 333 to 395 (SAND…SAVS), and 463 to 520 (PFSY…IPRN). Basic and acidic residues-rich tracts occupy residues 348 to 358 (LRFDPAKEGHQ) and 365 to 377 (QPKE…EETS). Positions 386–395 (AGNSQASAVS) are enriched in polar residues. A Phosphoserine modification is found at Ser468. Thr475 carries the post-translational modification Phosphothreonine.

This chain is Probable RNA-binding protein CG14230, found in Drosophila melanogaster (Fruit fly).